We begin with the raw amino-acid sequence, 185 residues long: Alkyl hydroperoxide reductase AhpD (185 aa).

Residue cysteine 131 is the Proton donor of the active site. Residues cysteine 131 and cysteine 134 are joined by a disulfide bond. Cysteine 134 functions as the Cysteine sulfenic acid (-SOH) intermediate in the catalytic mechanism.

It belongs to the AhpD family. As to quaternary structure, homotrimer.

The enzyme catalyses N(6)-[(R)-dihydrolipoyl]-L-lysyl-[lipoyl-carrier protein] + a hydroperoxide = N(6)-[(R)-lipoyl]-L-lysyl-[lipoyl-carrier protein] + an alcohol + H2O. Antioxidant protein with alkyl hydroperoxidase activity. Required for the reduction of the AhpC active site cysteine residues and for the regeneration of the AhpC enzyme activity. This is Alkyl hydroperoxide reductase AhpD from Frankia alni (strain DSM 45986 / CECT 9034 / ACN14a).